A 294-amino-acid chain; its full sequence is Oligopeptide transport system permease protein OppC (294 aa).

A run of 6 helical transmembrane segments spans residues 27 to 47 (MISTIFLVAVFLIVYIYSMFL), 94 to 114 (IAFAVTLITLVVGNILGVITG), 127 to 147 (FTDFVMILPSMMIIIVFVTII), 151 to 171 (NSWSLIGIISIFSWIGTTRLI), 202 to 224 (IWPNLSTLVIAEATLVFAGNIGL), and 260 to 280 (WTWVPATVVILIVVLAIIFIG). The ABC transmembrane type-1 domain maps to 88–280 (ARNSFNIAFA…IVVLAIIFIG (193 aa)).

It belongs to the binding-protein-dependent transport system permease family. OppBC subfamily. The complex is composed of two ATP-binding proteins (OppD and OppF), two transmembrane proteins (OppB and OppC) and a solute-binding protein (OppA).

The protein resides in the cell membrane. Part of the ABC transporter complex OppABCDF involved in the uptake of oligopeptides. Probably responsible for the translocation of the substrate across the membrane. Essential for uptake of peptides larger than three amino acids and for growth in milk. The chain is Oligopeptide transport system permease protein OppC (oppC) from Lactococcus lactis subsp. lactis (strain IL1403) (Streptococcus lactis).